Here is a 196-residue protein sequence, read N- to C-terminus: MPVGVPKVFYALPDEEEADWIDLYHCLYQERLIVICGDLNDEAVNQIVSVLIYLSTRDDSKEFFIYINSPGGSVTSGIAIYDAMRFNNTPVNTIAVGISASMASFILAGGDIGKRLAFPHSRIMIHQPEGGSEGQSSEIVHEAQEVVRIRRQVARIYAQRTGQPLDTIARDMDRDQFMSAREAKTYGIVDLVAAEK.

S101 functions as the Nucleophile in the catalytic mechanism. H126 is a catalytic residue.

It belongs to the peptidase S14 family. Component of the chloroplastic Clp protease core complex.

The protein resides in the plastid. The protein localises to the chloroplast stroma. It carries out the reaction Hydrolysis of proteins to small peptides in the presence of ATP and magnesium. alpha-casein is the usual test substrate. In the absence of ATP, only oligopeptides shorter than five residues are hydrolyzed (such as succinyl-Leu-Tyr-|-NHMec, and Leu-Tyr-Leu-|-Tyr-Trp, in which cleavage of the -Tyr-|-Leu- and -Tyr-|-Trp bonds also occurs).. In terms of biological role, cleaves peptides in various proteins in a process that requires ATP hydrolysis. Has a chymotrypsin-like activity. Plays a major role in the degradation of misfolded proteins. The protein is ATP-dependent Clp protease proteolytic subunit of Pleurastrum terricola (Filamentous green alga).